Consider the following 312-residue polypeptide: Glyoxylate/hydroxypyruvate reductase A (312 aa).

The active site involves arginine 227. Histidine 275 serves as the catalytic Proton donor.

It belongs to the D-isomer specific 2-hydroxyacid dehydrogenase family. GhrA subfamily.

The protein localises to the cytoplasm. The catalysed reaction is glycolate + NADP(+) = glyoxylate + NADPH + H(+). The enzyme catalyses (R)-glycerate + NAD(+) = 3-hydroxypyruvate + NADH + H(+). It catalyses the reaction (R)-glycerate + NADP(+) = 3-hydroxypyruvate + NADPH + H(+). Functionally, catalyzes the NADPH-dependent reduction of glyoxylate and hydroxypyruvate into glycolate and glycerate, respectively. This is Glyoxylate/hydroxypyruvate reductase A from Escherichia coli (strain 55989 / EAEC).